The primary structure comprises 179 residues: Large ribosomal subunit protein uL6 (179 aa).

It belongs to the universal ribosomal protein uL6 family. Part of the 50S ribosomal subunit.

Its function is as follows. This protein binds to the 23S rRNA, and is important in its secondary structure. It is located near the subunit interface in the base of the L7/L12 stalk, and near the tRNA binding site of the peptidyltransferase center. This chain is Large ribosomal subunit protein uL6, found in Persephonella marina (strain DSM 14350 / EX-H1).